Reading from the N-terminus, the 245-residue chain is uncharacterized protein (245 aa).

An N-terminal signal peptide occupies residues Met1–Ala18. The disordered stretch occupies residues Val21 to Asp66. N-linked (GlcNAc...) asparagine glycans are attached at residues Asn189 and Asn225.

It localises to the secreted. This is an uncharacterized protein from Arthroderma benhamiae (strain ATCC MYA-4681 / CBS 112371) (Trichophyton mentagrophytes).